Consider the following 692-residue polypeptide: Elongation factor G (692 aa).

The tr-type G domain maps to 8–283 (EDYRNFGIMA…AVVDYLPSPV (276 aa)). GTP is bound by residues 17 to 24 (AHIDAGKT), 81 to 85 (DTPGH), and 135 to 138 (NKMD).

The protein belongs to the TRAFAC class translation factor GTPase superfamily. Classic translation factor GTPase family. EF-G/EF-2 subfamily.

The protein localises to the cytoplasm. Functionally, catalyzes the GTP-dependent ribosomal translocation step during translation elongation. During this step, the ribosome changes from the pre-translocational (PRE) to the post-translocational (POST) state as the newly formed A-site-bound peptidyl-tRNA and P-site-bound deacylated tRNA move to the P and E sites, respectively. Catalyzes the coordinated movement of the two tRNA molecules, the mRNA and conformational changes in the ribosome. In Caulobacter vibrioides (strain ATCC 19089 / CIP 103742 / CB 15) (Caulobacter crescentus), this protein is Elongation factor G.